The following is a 361-amino-acid chain: Cysteine-rich with EGF-like domain protein 2-A (361 aa).

The N-terminal stretch at Met1–Ala24 is a signal peptide. The region spanning Asp134–Leu176 is the EGF-like 1 domain. 3 disulfide bridges follow: Cys138-Cys152, Cys146-Cys164, and Cys166-Cys175. Residue Asn188 is glycosylated (N-linked (GlcNAc...) asparagine). FU repeat units follow at residues Tyr191 to Pro238 and Ser251 to Val298. The EGF-like 2; calcium-binding domain maps to Asp288–Val329. Intrachain disulfides connect Cys292-Cys306, Cys299-Cys315, and Cys317-Cys328. Asn303 is a glycosylation site (N-linked (GlcNAc...) asparagine). Residues Asp341–Leu361 form a disordered region. Positions Thr346–Leu361 are enriched in polar residues. Asn352 carries an N-linked (GlcNAc...) asparagine glycan.

This sequence belongs to the CRELD family.

It localises to the secreted. It is found in the endoplasmic reticulum. In terms of biological role, possible role in neuronal acetylcholine receptor transport. The sequence is that of Cysteine-rich with EGF-like domain protein 2-A (creld2-a) from Xenopus laevis (African clawed frog).